A 510-amino-acid chain; its full sequence is ATP synthase subunit alpha (510 aa).

169-176 (GDRQTGKT) is an ATP binding site.

Belongs to the ATPase alpha/beta chains family. In terms of assembly, F-type ATPases have 2 components, CF(1) - the catalytic core - and CF(0) - the membrane proton channel. CF(1) has five subunits: alpha(3), beta(3), gamma(1), delta(1), epsilon(1). CF(0) has three main subunits: a(1), b(2) and c(9-12). The alpha and beta chains form an alternating ring which encloses part of the gamma chain. CF(1) is attached to CF(0) by a central stalk formed by the gamma and epsilon chains, while a peripheral stalk is formed by the delta and b chains.

It is found in the cell inner membrane. The catalysed reaction is ATP + H2O + 4 H(+)(in) = ADP + phosphate + 5 H(+)(out). Functionally, produces ATP from ADP in the presence of a proton gradient across the membrane. The alpha chain is a regulatory subunit. The protein is ATP synthase subunit alpha of Methylobacterium radiotolerans (strain ATCC 27329 / DSM 1819 / JCM 2831 / NBRC 15690 / NCIMB 10815 / 0-1).